The following is a 239-amino-acid chain: Type III effector protein HopBA1 (239 aa).

Positions 1–20 are enriched in low complexity; sequence MLNRISSSSPTSYVSSGSSS. The segment at 1–31 is disordered; the sequence is MLNRISSSSPTSYVSSGSSSAGINPSINVRP.

Its subcellular location is the secreted. It is found in the host cell. Its function is as follows. Virulence factor recognized by the A.thaliana disease resistance protein RBA1, which triggers plant cell death. HopBA1 enhances RBA1 self-association, which is necessary for ectopic autoactivation of host cell death. This Pseudomonas syringae pv. aptata protein is Type III effector protein HopBA1.